The following is a 513-amino-acid chain: ATP synthase subunit alpha (513 aa).

169–176 (GDRQTGKT) contacts ATP.

This sequence belongs to the ATPase alpha/beta chains family. As to quaternary structure, F-type ATPases have 2 components, CF(1) - the catalytic core - and CF(0) - the membrane proton channel. CF(1) has five subunits: alpha(3), beta(3), gamma(1), delta(1), epsilon(1). CF(0) has three main subunits: a(1), b(2) and c(9-12). The alpha and beta chains form an alternating ring which encloses part of the gamma chain. CF(1) is attached to CF(0) by a central stalk formed by the gamma and epsilon chains, while a peripheral stalk is formed by the delta and b chains.

Its subcellular location is the cell inner membrane. The catalysed reaction is ATP + H2O + 4 H(+)(in) = ADP + phosphate + 5 H(+)(out). Produces ATP from ADP in the presence of a proton gradient across the membrane. The alpha chain is a regulatory subunit. The protein is ATP synthase subunit alpha of Bordetella bronchiseptica (strain ATCC BAA-588 / NCTC 13252 / RB50) (Alcaligenes bronchisepticus).